A 196-amino-acid polypeptide reads, in one-letter code: Protease (196 aa).

Catalysis depends on residues histidine 54, aspartate 70, and cysteine 121.

It belongs to the peptidase C5 family. As to quaternary structure, interacts with protease cofactor pVI-C; this interaction is necessary for protease activation.

It localises to the virion. The protein localises to the host nucleus. It catalyses the reaction Cleaves proteins of the adenovirus and its host cell at two consensus sites: -Yaa-Xaa-Gly-Gly-|-Xaa- and -Yaa-Xaa-Gly-Xaa-|-Gly- (in which Yaa is Met, Ile or Leu, and Xaa is any amino acid).. Its activity is regulated as follows. Requires DNA and protease cofactor for maximal activation. Inside nascent virions, becomes partially activated by binding to the viral DNA, allowing it to cleave the cofactor that binds to the protease and fully activates it. Actin, like the viral protease cofactor, seems to act as a cofactor in the cleavage of cytokeratin 18 and of actin itself. In terms of biological role, cleaves viral precursor proteins (pTP, pIIIa, pVI, pVII, pVIII, and pX) inside newly assembled particles giving rise to mature virions. Protease complexed to its cofactor slides along the viral DNA to specifically locate and cleave the viral precursors. Mature virions have a weakened organization compared to the unmature virions, thereby facilitating subsequent uncoating. Without maturation, the particle lacks infectivity and is unable to uncoat. Late in adenovirus infection, in the cytoplasm, may participate in the cytoskeleton destruction. Cleaves host cell cytoskeletal keratins K7 and K18. The chain is Protease from Bos taurus (Bovine).